A 126-amino-acid polypeptide reads, in one-letter code: Large ribosomal subunit protein bL12 (126 aa).

It belongs to the bacterial ribosomal protein bL12 family. Homodimer. Part of the ribosomal stalk of the 50S ribosomal subunit. Forms a multimeric L10(L12)X complex, where L10 forms an elongated spine to which 2 to 4 L12 dimers bind in a sequential fashion. Binds GTP-bound translation factors.

Functionally, forms part of the ribosomal stalk which helps the ribosome interact with GTP-bound translation factors. Is thus essential for accurate translation. The sequence is that of Large ribosomal subunit protein bL12 from Coxiella burnetii (strain CbuK_Q154) (Coxiella burnetii (strain Q154)).